The chain runs to 435 residues: Mitogen-activated protein kinase HOG1 (435 aa).

Thr-2 is modified (N-acetylthreonine). The Protein kinase domain maps to 23–302 (YNDLNPVGMG…AADALAHPYS (280 aa)). Residues 29–37 (VGMGAFGLV) and Lys-52 contribute to the ATP site. Catalysis depends on Asp-144, which acts as the Proton acceptor. Arsenite is bound by residues Cys-156 and Cys-161. Phosphothreonine; by PBS2 is present on Thr-174. The TXY signature appears at 174–176 (TGY). A Phosphotyrosine; by PBS2 modification is found at Tyr-176. Cys-205 contributes to the arsenite binding site.

Belongs to the protein kinase superfamily. Ser/Thr protein kinase family. MAP kinase subfamily. HOG1 sub-subfamily. Interacts with CDC37, HOT1, KIN28, PTP2, PTP3, RBP1, RCK2, RPD3, SIC1, SMP1 and SIN4. The cofactor is Mg(2+). Activated by PBS2-mediated concomitant phosphorylation at Thr-174 and Tyr-176. Post-translationally, dually phosphorylated on Thr-174 and Tyr-176, which activates the enzyme.

It is found in the cytoplasm. Its subcellular location is the nucleus. It carries out the reaction L-seryl-[protein] + ATP = O-phospho-L-seryl-[protein] + ADP + H(+). The enzyme catalyses L-threonyl-[protein] + ATP = O-phospho-L-threonyl-[protein] + ADP + H(+). Its activity is regulated as follows. Activated by tyrosine and threonine phosphorylation. Inactivated by dephosphorylation via recruitment of PTC1 to the PBS2-HOG1 complex after adaptation to osmotic stress. PTP2 and PTP3 inactivate HOG1 by dephosphorylating Tyr-176, while the PP2Cs PTC1 and PTC2 or PTC3 dephosphorylate Thr-174 in the activation loop. Its function is as follows. Proline-directed serine/threonine-protein kinase involved in a signal transduction pathway that is activated by changes in the osmolarity of the extracellular environment. Controls osmotic regulation of transcription via the stress response element (STRE) in promoters of target genes. Upon osmotic shock, associates with the SKO1-SSN6-TUP1 complex, phosphorylates SKO1, and converts it into an activator that subsequently recruits Swi/Snf and SAGA complexes. Activates the SMP1 transcription factor and the RCK2 kinase, both also involved in the regulation of the expression of a subset of osmotic stress-related genes. Phosphorylation of HSL1 by HOG1 leads to a G2 arrest essential for cell survival at high osmolarity. Also mediates cell-cycle arrest in G1 phase by the dual targeting of SIC1. Phosphorylates methyltransferase DOT1 at least on 'Ser-565' and 'Thr-576'. Regulates MFA2 ARE-mediated translation in response to carbon source. Targets RPD3 histone deacetylase to osmoresponsive promoters to induce gene expression on stress. Required for the Golgi apparatus localization of MNN1. Plays an essential role in maintaining water homeostasis, arsenite detoxification, copper-resistance, cold-resistance, hydrogen peroxide response, adaptation to citric acid stress, and repression of the mating pathway activity. Functions as an arsenic sensor and effector via direct binding to arsenic and subsequent phosphorylation of the ARR1 transcription factor. The protein is Mitogen-activated protein kinase HOG1 (HOG1) of Saccharomyces cerevisiae (strain ATCC 204508 / S288c) (Baker's yeast).